The following is a 314-amino-acid chain: GMP synthase [glutamine-hydrolyzing] subunit B (314 aa).

Positions 2 to 186 (FDPKKFVEEA…LGIPDEIVER (185 aa)) constitute a GMPS ATP-PPase domain. 29 to 35 (SGGVDST) contacts ATP.

Heterodimer composed of a glutamine amidotransferase subunit (A) and a GMP-binding subunit (B).

It catalyses the reaction XMP + L-glutamine + ATP + H2O = GMP + L-glutamate + AMP + diphosphate + 2 H(+). It functions in the pathway purine metabolism; GMP biosynthesis; GMP from XMP (L-Gln route): step 1/1. In terms of biological role, catalyzes the synthesis of GMP from XMP. This Methanopyrus kandleri (strain AV19 / DSM 6324 / JCM 9639 / NBRC 100938) protein is GMP synthase [glutamine-hydrolyzing] subunit B (guaAB).